We begin with the raw amino-acid sequence, 400 residues long: Putative niacin/nicotinamide transporter NiaP (400 aa).

Topologically, residues 1–14 (MGKQQPISQRKLLG) are cytoplasmic. The helical transmembrane segment at 15–35 (VAGLGWLFDAMDVGILSFIIA) threads the bilayer. The Extracellular segment spans residues 36–49 (ALHVEWNLSPEEMK). A helical membrane pass occupies residues 50–70 (WIGSVNSIGMAAGAFLFGLLA). At 71–77 (DRIGRKK) the chain is on the cytoplasmic side. 2 helical membrane-spanning segments follow: residues 78 to 98 (VFII…FVTS) and 99 to 119 (LSAF…ELPV). Residues 120 to 142 (ASTLVSEAVVPEKRGRVIVLLES) lie on the Cytoplasmic side of the membrane. A helical transmembrane segment spans residues 143–163 (FWAVGWLAAALISYFVIPSFG). The Extracellular portion of the chain corresponds to 164–165 (WQ). A helical membrane pass occupies residues 166-186 (AALLLTALTAFYALYLRTSLP). The Cytoplasmic segment spans residues 187-217 (DSPKYESLSAKKRSMWENVKSVWARQYIRPT). The chain crosses the membrane as a helical span at residues 218–238 (VMLSIVWFCVVFSYYGMFLWL). Residues 239–253 (PSVMLLKGFSMIQSF) lie on the Extracellular side of the membrane. A helical membrane pass occupies residues 254–274 (EYVLLMTLAQLPGYFSAAWLI). Over 275–280 (EKAGRK) the chain is Cytoplasmic. A helical membrane pass occupies residues 281–301 (WILVVYLIGTAGSAYFFGTAD). At 302–304 (SLS) the chain is on the extracellular side. The helical transmembrane segment at 305–325 (LLLTAGVLLSFFNLGAWGVLY) threads the bilayer. The Cytoplasmic portion of the chain corresponds to 326–343 (AYTPEQYPTAIRATGSGT). The chain crosses the membrane as a helical span at residues 344–364 (TAAFGRIGGIFGPLLVGTLAA). Topologically, residues 365–370 (RHISFS) are extracellular. The chain crosses the membrane as a helical span at residues 371 to 391 (VIFSIFCIAILLAVACILIMG). Residues 392–400 (KETKQTELE) are Cytoplasmic-facing.

This sequence belongs to the major facilitator superfamily. Sugar transporter (TC 2.A.1.1) family.

It localises to the cell membrane. Probably involved in the uptake of amidated and deamidated forms of niacin. Increases the growth rate of E.coli that is unable to make niacin de novo; confers increased sensitivity to the toxic niacin analog 6-amino-nicotinamide to wild-type E.coli. There is probably another mechanism for niacin uptake. In Bacillus subtilis (strain 168), this protein is Putative niacin/nicotinamide transporter NiaP.